A 231-amino-acid polypeptide reads, in one-letter code: Flagellar L-ring protein (231 aa).

The N-terminal stretch at 1–18 is a signal peptide; sequence MNRLMIVSLLGIATALGG. The N-palmitoyl cysteine moiety is linked to residue Cys-19. Cys-19 carries the S-diacylglycerol cysteine lipid modification. Residues 118 to 141 form a disordered region; the sequence is LSLSAEYGGSRDAKGDSQAGQSNS.

It belongs to the FlgH family. The basal body constitutes a major portion of the flagellar organelle and consists of four rings (L,P,S, and M) mounted on a central rod.

It localises to the cell outer membrane. The protein localises to the bacterial flagellum basal body. In terms of biological role, assembles around the rod to form the L-ring and probably protects the motor/basal body from shearing forces during rotation. This Pseudomonas aeruginosa (strain UCBPP-PA14) protein is Flagellar L-ring protein.